The primary structure comprises 449 residues: Ribosomal protein uS12 methylthiotransferase RimO (449 aa).

Positions 16-126 (PKISFVSLGC…VMEAVHAAIA (111 aa)) constitute an MTTase N-terminal domain. [4Fe-4S] cluster is bound by residues C25, C61, C90, C157, C161, and C164. The Radical SAM core domain maps to 143–381 (LTPRHYAYLK…MEHQQKISAR (239 aa)). A TRAM domain is found at 384 to 449 (REKIGKHVSV…DAYDLHGKAV (66 aa)).

This sequence belongs to the methylthiotransferase family. RimO subfamily. [4Fe-4S] cluster is required as a cofactor.

It localises to the cytoplasm. It catalyses the reaction L-aspartate(89)-[ribosomal protein uS12]-hydrogen + (sulfur carrier)-SH + AH2 + 2 S-adenosyl-L-methionine = 3-methylsulfanyl-L-aspartate(89)-[ribosomal protein uS12]-hydrogen + (sulfur carrier)-H + 5'-deoxyadenosine + L-methionine + A + S-adenosyl-L-homocysteine + 2 H(+). Functionally, catalyzes the methylthiolation of an aspartic acid residue of ribosomal protein uS12. The protein is Ribosomal protein uS12 methylthiotransferase RimO of Beijerinckia indica subsp. indica (strain ATCC 9039 / DSM 1715 / NCIMB 8712).